A 687-amino-acid chain; its full sequence is Solute carrier organic anion transporter family member 1B2 (687 aa).

Residues 1 to 28 (MDHTQQSRKAAEAQPSRSKQTRFCDGFK) lie on the Cytoplasmic side of the membrane. The helical transmembrane segment at 29–48 (LFLAALSFSYICKALGGVVM) threads the bilayer. Residues 49 to 67 (KSSITQIERRFDIPSSISG) are Extracellular-facing. Residues 68 to 88 (LIDGGFEIGNLLVIVFVSYFG) form a helical membrane-spanning segment. Residues 89 to 94 (SKLHRP) are Cytoplasmic-facing. Residues 95–119 (KLIGIGCFIMGIGSILTALPHFFMG) traverse the membrane as a helical segment. Topologically, residues 120–165 (YYKYAKENDIGSLGNSTLTCFINQMTSPTGPSPEIVEKGCEKGLKS) are extracellular. Asn-134 carries an N-linked (GlcNAc...) asparagine glycan. A helical transmembrane segment spans residues 166–194 (HMWIYVLMGNMLRGIGETPIVPLGISYLD). The Cytoplasmic portion of the chain corresponds to 195–213 (DFAKEGHTSMHLGTLHTIA). A helical transmembrane segment spans residues 214–234 (MIGPILGFIMSSVFAKIYVDV). Residues 235-252 (GYVDLNSVRITPNDARWV) lie on the Extracellular side of the membrane. The chain crosses the membrane as a helical span at residues 253–277 (GAWWLSFIVNGLLCITSSIPFFFLP). Residues 278 to 328 (KIPKRSQEERKNSVSLHAPKTDEEKKHMTNLTKQEEQDPSNMTGFLRSLRS) are Cytoplasmic-facing. The interval 286 to 311 (ERKNSVSLHAPKTDEEKKHMTNLTKQ) is disordered. Residues Ser-290 and Ser-292 each carry the phosphoserine modification. A helical transmembrane segment spans residues 329–350 (ILTNEIYVIFLILTLLQVSGFI). Residues 351–370 (GSFTYLFKFIEQQFGRTASQ) are Extracellular-facing. A helical membrane pass occupies residues 371–394 (ANFLLGIITIPTMATAMFLGGYIV). Over 395 to 398 (KKFK) the chain is Cytoplasmic. A helical transmembrane segment spans residues 399–422 (LTSVGIAKFVFFTSSVAYAFQFLY). Residues 423–531 (FPLLCENKPF…YKCKTNYYFY (109 aa)) are Extracellular-facing. A Kazal-like domain is found at 450-507 (DVPLSYCNSDCSCDKNQWEPICGENGVTYISPCLAGCKSFRGDKKPNNTEFYDCSCIS). 3 disulfides stabilise this stretch: Cys-456–Cys-486, Cys-462–Cys-482, and Cys-471–Cys-505. N-linked (GlcNAc...) asparagine glycosylation is found at Asn-496 and Asn-511. A helical transmembrane segment spans residues 532–554 (IILQVTVSFFTAMGSPSLILILM). Topologically, residues 555–563 (KSVQPELKS) are cytoplasmic. A helical membrane pass occupies residues 564–589 (LAMGFHSLIIRALGGILAPIYYGAFI). Topologically, residues 590-623 (DRTCIKWSVTSCGKRGACRLYNSRLFGFSYLGLN) are extracellular. The helical transmembrane segment at 624–641 (LALKTPPLFLYVVLIYFT) threads the bilayer. The Cytoplasmic portion of the chain corresponds to 642–687 (KRKYKRNDNKTLENGRQFTDEGNPDSVNKNGYYCVPYDEQSNETPL). Residue Thr-660 is modified to Phosphothreonine. Ser-667 is subject to Phosphoserine.

It belongs to the organo anion transporter (TC 2.A.60) family. Liver specific. Expression is highest in central perivenous hepatocytes and lowest in the periportal region. Isoform 1 predominates. Not detected in heart, brain, kidney, skeletal muscle, lung, testis or spleen.

The protein localises to the basolateral cell membrane. It carries out the reaction estrone 3-sulfate(out) = estrone 3-sulfate(in). The enzyme catalyses taurocholate(out) = taurocholate(in). It catalyses the reaction prostaglandin E2(out) = prostaglandin E2(in). The catalysed reaction is L-thyroxine(out) = L-thyroxine(in). In terms of biological role, mediates the Na(+)-independent uptake of organic anions such as taurochlate, bromosulfophthalein and steroid conjugates (estrone 3-sulfate, 17-beta-glucuronosyl estradiol, dehydroepiandrosterone sulfate). Also transports prostaglandin E2 and L-thyroxine (T4). Shows a pH-sensitive substrate specificity which may be ascribed to the protonation state of the binding site and leads to a stimulation of substrate transport in an acidic microenvironment. Hydrogencarbonate/HCO3(-) acts as the probable counteranion that exchanges for organic anions. This is Solute carrier organic anion transporter family member 1B2 (Slco1b2) from Rattus norvegicus (Rat).